The following is a 339-amino-acid chain: Ribosomal RNA large subunit methyltransferase M (339 aa).

S-adenosyl-L-methionine-binding positions include Ser-176, 206–209 (APGG), Asp-225, Asp-245, and Asp-261. Lys-290 acts as the Proton acceptor in catalysis.

This sequence belongs to the class I-like SAM-binding methyltransferase superfamily. RNA methyltransferase RlmE family. RlmM subfamily. In terms of assembly, monomer.

The protein resides in the cytoplasm. It carries out the reaction cytidine(2498) in 23S rRNA + S-adenosyl-L-methionine = 2'-O-methylcytidine(2498) in 23S rRNA + S-adenosyl-L-homocysteine + H(+). Functionally, catalyzes the 2'-O-methylation at nucleotide C2498 in 23S rRNA. The protein is Ribosomal RNA large subunit methyltransferase M of Halorhodospira halophila (strain DSM 244 / SL1) (Ectothiorhodospira halophila (strain DSM 244 / SL1)).